We begin with the raw amino-acid sequence, 441 residues long: Queuine tRNA-ribosyltransferase accessory subunit 2 (441 aa).

Zn(2+)-binding residues include cysteine 307, cysteine 309, cysteine 312, and histidine 338.

Belongs to the queuine tRNA-ribosyltransferase family. QTRT2 subfamily. Heterodimer of a catalytic subunit and an accessory subunit. It depends on Zn(2+) as a cofactor.

The protein resides in the cytoplasm. Functionally, non-catalytic subunit of the queuine tRNA-ribosyltransferase (TGT) that catalyzes the base-exchange of a guanine (G) residue with queuine (Q) at position 34 (anticodon wobble position) in tRNAs with GU(N) anticodons (tRNA-Asp, -Asn, -His and -Tyr), resulting in the hypermodified nucleoside queuosine (7-(((4,5-cis-dihydroxy-2-cyclopenten-1-yl)amino)methyl)-7-deazaguanosine). This Schizosaccharomyces pombe (strain 972 / ATCC 24843) (Fission yeast) protein is Queuine tRNA-ribosyltransferase accessory subunit 2 (qtr2).